Consider the following 234-residue polypeptide: Peroxisomal coenzyme A diphosphatase ndx-8 (234 aa).

The region spanning 27–162 (EQDAGVLILL…TFLIDEFYMV (136 aa)) is the Nudix hydrolase domain. The short motif at 66-90 (GGMMDDEDGQNVRRTAIREAYEEVG) is the Nudix box element. Residues glutamate 84 and glutamate 88 each coordinate Mg(2+). The helical transmembrane segment at 170 to 190 (YPTTYGVTALMCIVVAIGLLG) threads the bilayer. The Microbody targeting signal motif lies at 232 to 234 (SKI).

Belongs to the Nudix hydrolase family. Requires Mg(2+) as cofactor. Mn(2+) is required as a cofactor.

It is found in the peroxisome membrane. In terms of biological role, coenzyme A diphosphatase which mediates the cleavage of CoA into 3',5'-ADP and 4'-phosphopantetheine. This is Peroxisomal coenzyme A diphosphatase ndx-8 (ndx-8) from Caenorhabditis elegans.